Reading from the N-terminus, the 65-residue chain is Large ribosomal subunit protein bL33m (65 aa).

A mitochondrion-targeting transit peptide spans 1 to 8 (MFLTTANL).

Belongs to the bacterial ribosomal protein bL33 family. Component of the mitochondrial ribosome large subunit (39S) which comprises a 16S rRNA and about 50 distinct proteins.

The protein resides in the mitochondrion. This is Large ribosomal subunit protein bL33m (mrpl33) from Tetraodon nigroviridis (Spotted green pufferfish).